The following is a 465-amino-acid chain: Trigger factor (465 aa).

Residues 163 to 248 enclose the PPIase FKBP-type domain; it reads GDVINFNFKG…INKIKENQPA (86 aa). The disordered stretch occupies residues 431–465; it reads EIVNKNQNDNEIEQDKEQKDNNEEKIKQENNLENK. The segment covering 443–465 has biased composition (basic and acidic residues); sequence EQDKEQKDNNEEKIKQENNLENK.

The protein belongs to the FKBP-type PPIase family. Tig subfamily.

It is found in the cytoplasm. It catalyses the reaction [protein]-peptidylproline (omega=180) = [protein]-peptidylproline (omega=0). Its function is as follows. Involved in protein export. Acts as a chaperone by maintaining the newly synthesized protein in an open conformation. Functions as a peptidyl-prolyl cis-trans isomerase. In Mesomycoplasma hyopneumoniae (strain 232) (Mycoplasma hyopneumoniae), this protein is Trigger factor.